The sequence spans 619 residues: Dihydroxy-acid dehydratase (619 aa).

D81 contributes to the Mg(2+) binding site. C122 lines the [2Fe-2S] cluster pocket. Mg(2+)-binding residues include D123 and K124. K124 carries the N6-carboxylysine modification. [2Fe-2S] cluster is bound at residue C198. E494 is a Mg(2+) binding site. S520 serves as the catalytic Proton acceptor.

The protein belongs to the IlvD/Edd family. In terms of assembly, homodimer. It depends on [2Fe-2S] cluster as a cofactor. Requires Mg(2+) as cofactor.

The enzyme catalyses (2R)-2,3-dihydroxy-3-methylbutanoate = 3-methyl-2-oxobutanoate + H2O. The catalysed reaction is (2R,3R)-2,3-dihydroxy-3-methylpentanoate = (S)-3-methyl-2-oxopentanoate + H2O. The protein operates within amino-acid biosynthesis; L-isoleucine biosynthesis; L-isoleucine from 2-oxobutanoate: step 3/4. Its pathway is amino-acid biosynthesis; L-valine biosynthesis; L-valine from pyruvate: step 3/4. Functionally, functions in the biosynthesis of branched-chain amino acids. Catalyzes the dehydration of (2R,3R)-2,3-dihydroxy-3-methylpentanoate (2,3-dihydroxy-3-methylvalerate) into 2-oxo-3-methylpentanoate (2-oxo-3-methylvalerate) and of (2R)-2,3-dihydroxy-3-methylbutanoate (2,3-dihydroxyisovalerate) into 2-oxo-3-methylbutanoate (2-oxoisovalerate), the penultimate precursor to L-isoleucine and L-valine, respectively. This Neisseria meningitidis serogroup A / serotype 4A (strain DSM 15465 / Z2491) protein is Dihydroxy-acid dehydratase.